A 172-amino-acid polypeptide reads, in one-letter code: MKLGIVIFPSKMIQDKANGLRKRYDPHYALVPPHITLKTPFETQDEQLESIVNELHTIASKTNPFALHVGKVGSFAPVNNVLYFKVEKTPELTFLNEEMHSGFFTQEREYAFVPHLTIGQGLSDAEHADVLGRLRMKDFYYEQPIDRFHLLYQLENGTWTVHETFRLGKGNN.

H34 (proton donor) is an active-site residue. 2 short sequence motifs (HXTX) span residues 34–37 (HITL) and 115–118 (HLTI). Catalysis depends on H115, which acts as the Proton acceptor.

Belongs to the 2H phosphoesterase superfamily. YjcG family.

The protein is Putative phosphoesterase BCE_1348 of Bacillus cereus (strain ATCC 10987 / NRS 248).